The following is a 447-amino-acid chain: RNA-binding protein 208 (447 aa).

2 consecutive RRM domains span residues 73–147 and 158–236; these read RSVY…WAYA and FHIF…WATK. Positions 254-269 are enriched in polar residues; it reads TNGSSSNPGMEASQDT. 2 disordered regions span residues 254-279 and 353-372; these read TNGSSSNPGMEASQDTGSKENPENNP and WGNKPTPPGTSSKPLPPPLP. The 75-residue stretch at 282–356 folds into the RRM 3 domain; that stretch reads TTVYVGNLGH…KPIKCSWGNK (75 aa).

Interacts with RBP-P.

Functionally, RNA-binding protein. This chain is RNA-binding protein 208, found in Oryza sativa subsp. japonica (Rice).